We begin with the raw amino-acid sequence, 651 residues long: LysM domain receptor-like kinase 3 (651 aa).

Residues 1 to 19 form the signal peptide; the sequence is MNLTFYIFFLSLLPSFSSS. Residues N2, N23, N42, N73, N86, N100, N114, and N177 are each glycosylated (N-linked (GlcNAc...) asparagine). Over 20–236 the chain is Extracellular; it reads KPMNCSDTTR…TAKSGSHVPY (217 aa). Intrachain disulfides connect C24–C76, C31–C133, and C74–C131. Positions 142 to 186 constitute a LysM domain; it reads MSYVAMAGDSVQSLSSRFGVSMDRIEDVNGILNLDNITAGDLLYI. The segment at 196–216 is disordered; that stretch reads YETSKINPPAPSPAPASSLAN. N-linked (GlcNAc...) asparagine glycosylation is found at N218 and N225. A helical transmembrane segment spans residues 237–257; the sequence is IWIVGGLGVVLALLVLCILVC. The Cytoplasmic segment spans residues 258–651; the sequence is ICLRSSSCSS…QVFSGLVQGR (394 aa). T330 is modified (phosphothreonine). In terms of domain architecture, Protein kinase spans 341–628; that stretch reads FSDSNLLGHG…VVISLSQILL (288 aa). Residues 347–355 and K368 each bind ATP; that span reads LGHGNYGSV. A Phosphotyrosine modification is found at Y410. The Proton acceptor role is filled by D464. S468 carries the phosphoserine modification. Phosphothreonine is present on residues T500 and T505. Y513 carries the post-translational modification Phosphotyrosine.

It belongs to the protein kinase superfamily. Ser/Thr protein kinase family.

It localises to the cell membrane. Putative Lysin motif (LysM) receptor kinase that may recognize microbe-derived N-acetylglucosamine (NAG)-containing ligands. The polypeptide is LysM domain receptor-like kinase 3 (LYK3) (Arabidopsis thaliana (Mouse-ear cress)).